A 205-amino-acid chain; its full sequence is Small ribosomal subunit protein uS4 (205 aa).

The segment at 18 to 49 (NIWGRPKSPVNKREYGPGQHGQRRKGKLSDFG) is disordered. The S4 RNA-binding domain occupies 94-157 (RRLDTVVYRA…KQLALVLEAN (64 aa)).

The protein belongs to the universal ribosomal protein uS4 family. As to quaternary structure, part of the 30S ribosomal subunit. Contacts protein S5. The interaction surface between S4 and S5 is involved in control of translational fidelity.

One of the primary rRNA binding proteins, it binds directly to 16S rRNA where it nucleates assembly of the body of the 30S subunit. Its function is as follows. With S5 and S12 plays an important role in translational accuracy. The polypeptide is Small ribosomal subunit protein uS4 (Nitrobacter hamburgensis (strain DSM 10229 / NCIMB 13809 / X14)).